The chain runs to 539 residues: uncharacterized protein (539 aa).

Residues 316–433 (AEHHHQKGKK…ATVERSSPPE (118 aa)) are disordered. The span at 318–352 (HHHQKGKKVPATHRRSSTPHARKTAGTRARTRARK) shows a compositional bias: basic residues. Residues 362-384 (KISKKDSGESKQKDETAGMERVF) show a composition bias toward basic and acidic residues. Over residues 390 to 402 (NVRTCSSRASRTG) the composition is skewed to polar residues.

This is an uncharacterized protein from Treponema pallidum (strain Nichols).